The primary structure comprises 400 residues: Argininosuccinate synthase (400 aa).

ATP is bound by residues 6 to 14 and Ala-33; that span reads AYSGGLDTS. Residues Tyr-84 and Ser-89 each contribute to the L-citrulline site. Gly-114 is an ATP binding site. L-aspartate-binding residues include Thr-116, Asn-120, and Asp-121. An L-citrulline-binding site is contributed by Asn-120. The L-citrulline site is built by Arg-124, Ser-173, Ser-182, Glu-258, and Tyr-270.

The protein belongs to the argininosuccinate synthase family. Type 1 subfamily. As to quaternary structure, homotetramer.

It is found in the cytoplasm. It carries out the reaction L-citrulline + L-aspartate + ATP = 2-(N(omega)-L-arginino)succinate + AMP + diphosphate + H(+). The protein operates within amino-acid biosynthesis; L-arginine biosynthesis; L-arginine from L-ornithine and carbamoyl phosphate: step 2/3. This chain is Argininosuccinate synthase, found in Thermus thermophilus (strain ATCC 27634 / DSM 579 / HB8).